A 212-amino-acid polypeptide reads, in one-letter code: Golgi SNAP receptor complex member 2 homolog memb-1 (212 aa).

The Cytoplasmic segment spans residues 1–189 (MEAQYQSTNF…QVIDRRVRED (189 aa)). Residues 190 to 210 (WIFVIGCIVCCIFMYAFYRFW) traverse the membrane as a helical; Anchor for type IV membrane protein segment. Residues 211–212 (RG) are Vesicular-facing.

It belongs to the GOSR2 family. In terms of assembly, part of a unique SNARE complex.

The protein localises to the golgi apparatus. It is found in the cis-Golgi network membrane. It localises to the golgi apparatus membrane. Its subcellular location is the endoplasmic reticulum membrane. Involved in transport of proteins from the cis/medial-Golgi to the trans-Golgi network. This is Golgi SNAP receptor complex member 2 homolog memb-1 from Caenorhabditis briggsae.